The chain runs to 259 residues: Zinc import ATP-binding protein ZnuC (259 aa).

The ABC transporter domain occupies 11-225 (IRLENIYVHR…PEYLAIFGGQ (215 aa)). 43–50 (GPNGAGKS) is a binding site for ATP.

It belongs to the ABC transporter superfamily. Zinc importer (TC 3.A.1.15.5) family. As to quaternary structure, the complex is composed of two ATP-binding proteins (ZnuC), two transmembrane proteins (ZnuB) and a solute-binding protein (ZnuA).

Its subcellular location is the cell inner membrane. The enzyme catalyses Zn(2+)(out) + ATP(in) + H2O(in) = Zn(2+)(in) + ADP(in) + phosphate(in) + H(+)(in). Part of the ABC transporter complex ZnuABC involved in zinc import. Responsible for energy coupling to the transport system. The protein is Zinc import ATP-binding protein ZnuC of Acinetobacter baylyi (strain ATCC 33305 / BD413 / ADP1).